Here is an 828-residue protein sequence, read N- to C-terminus: Fibroblast growth factor receptor 4 (828 aa).

The signal sequence occupies residues 1 to 31 (MSGSIRRSYTAMQNFPRFLLGVLFVATLSSC). Over 32-392 (RPRLSEDEAN…AEPAESRYMD (361 aa)) the chain is Extracellular. An Ig-like C2-type 1 domain is found at 33–127 (PRLSEDEANW…GKILRRFSIS (95 aa)). Cys67 and Cys112 are oxidised to a cystine. A glycan (N-linked (GlcNAc...) asparagine) is linked at Asn70. A disordered region spans residues 132–156 (LASGDEEEEEEDDDDEDGRREDTTA). Positions 135–147 (GDEEEEEEDDDDE) are enriched in acidic residues. 2 Ig-like C2-type domains span residues 169-259 (PYWT…LTYT) and 272-372 (PILQ…AWLT). Cys194 and Cys247 form a disulfide bridge. 4 N-linked (GlcNAc...) asparagine glycosylation sites follow: Asn244, Asn281, Asn313, and Asn345. Cysteines 294 and 356 form a disulfide. The helical transmembrane segment at 393–413 (IIIYTSGFLAVAMAIMIVILC) threads the bilayer. Residues 414–828 (RMQTPHSKQT…YHNIHSQLGT (415 aa)) are Cytoplasmic-facing. Residues 490-777 (LVLGKPLGEG…ILTAVSEEYL (288 aa)) form the Protein kinase domain. ATP contacts are provided by residues 496–504 (LGEGCFGQV) and Lys526. Residue Asp635 is the Proton acceptor of the active site. Phosphotyrosine; by autocatalysis is present on residues Tyr665, Tyr666, and Tyr776.

The protein belongs to the protein kinase superfamily. Tyr protein kinase family. Fibroblast growth factor receptor subfamily. In terms of processing, ubiquitinated. Subject to proteasomal degradation when not fully glycosylated. Post-translationally, autophosphorylated. Binding of FGF family members together with heparan sulfate proteoglycan or heparin promotes receptor dimerization and autophosphorylation on tyrosine residues. Autophosphorylation occurs in trans between the two FGFR molecules present in the dimer.

The protein resides in the cell membrane. Its subcellular location is the endosome. It is found in the endoplasmic reticulum. It catalyses the reaction L-tyrosyl-[protein] + ATP = O-phospho-L-tyrosyl-[protein] + ADP + H(+). With respect to regulation, present in an inactive conformation in the absence of bound ligand. Ligand binding leads to dimerization and activation by autophosphorylation on tyrosine residues. Its function is as follows. Tyrosine-protein kinase that acts as a cell-surface receptor for fibroblast growth factors and plays a role in the regulation of cell proliferation, differentiation and migration, and in regulation of lipid metabolism, bile acid biosynthesis, glucose uptake, vitamin D metabolism and phosphate homeostasis. Required for normal down-regulation of the expression of CYP7A1, the rate-limiting enzyme in bile acid synthesis, in response to FGF19. Phosphorylates PLCG1 and FRS2. Ligand binding leads to the activation of several signaling cascades. Activation of PLCG1 leads to the production of the cellular signaling molecules diacylglycerol and inositol 1,4,5-trisphosphate. Phosphorylation of FRS2 triggers recruitment of GRB2, GAB1, PIK3R1 and SOS1, and mediates activation of RAS, MAPK1/ERK2, MAPK3/ERK1 and the MAP kinase signaling pathway, as well as of the AKT1 signaling pathway. In Xenopus laevis (African clawed frog), this protein is Fibroblast growth factor receptor 4 (fgfr4).